A 176-amino-acid chain; its full sequence is Cytochrome b (176 aa).

3 helical membrane passes run 33–53 (FGSL…FLAM), 77–98 (WLIR…FLHV), and 113–133 (WNIG…GYVL). Residues His83 and His97 each coordinate heme b.

It belongs to the cytochrome b family. In terms of assembly, the cytochrome bc1 complex contains 11 subunits: 3 respiratory subunits (MT-CYB, CYC1 and UQCRFS1), 2 core proteins (UQCRC1 and UQCRC2) and 6 low-molecular weight proteins (UQCRH/QCR6, UQCRB/QCR7, UQCRQ/QCR8, UQCR10/QCR9, UQCR11/QCR10 and a cleavage product of UQCRFS1). This cytochrome bc1 complex then forms a dimer. Requires heme b as cofactor.

It localises to the mitochondrion inner membrane. Component of the ubiquinol-cytochrome c reductase complex (complex III or cytochrome b-c1 complex) that is part of the mitochondrial respiratory chain. The b-c1 complex mediates electron transfer from ubiquinol to cytochrome c. Contributes to the generation of a proton gradient across the mitochondrial membrane that is then used for ATP synthesis. The chain is Cytochrome b (MT-CYB) from Sciurus carolinensis (Eastern gray squirrel).